The following is a 75-amino-acid chain: DNA-directed RNA polymerase subunit omega (75 aa).

The protein belongs to the RNA polymerase subunit omega family. In cyanobacteria the RNAP catalytic core is composed of 2 alpha, 1 beta, 1 beta', 1 gamma and 1 omega subunit. When a sigma factor is associated with the core the holoenzyme is formed, which can initiate transcription.

It carries out the reaction RNA(n) + a ribonucleoside 5'-triphosphate = RNA(n+1) + diphosphate. In terms of biological role, promotes RNA polymerase assembly. Latches the N- and C-terminal regions of the beta' subunit thereby facilitating its interaction with the beta and alpha subunits. In Synechococcus sp. (strain WH7803), this protein is DNA-directed RNA polymerase subunit omega.